A 129-amino-acid polypeptide reads, in one-letter code: Small ribosomal subunit protein uS9 (129 aa).

It belongs to the universal ribosomal protein uS9 family.

The chain is Small ribosomal subunit protein uS9 from Helicobacter pylori (strain P12).